Reading from the N-terminus, the 295-residue chain is uncharacterized protein (295 aa).

Disordered regions lie at residues 33–52 and 180–295; these read VDAP…DSHS and LSKA…AELK. The residue at position 50 (S50) is a Phosphoserine. 2 stretches are compositionally biased toward polar residues: residues 205–217 and 241–251; these read QKNS…SKLI and TSRASVLSQSP. The segment covering 267-276 has biased composition (acidic residues); the sequence is EASEGPEDTP. Low complexity predominate over residues 277 to 289; sequence ESSQSPEESVSAS.

This is an uncharacterized protein from Homo sapiens (Human).